We begin with the raw amino-acid sequence, 462 residues long: Steroidogenic factor 1 (462 aa).

Residues 10-85 (DELCPVCGDK…VGMRLEAVRA (76 aa)) constitute a DNA-binding region (nuclear receptor). The NR C4-type zinc-finger motif lies at 13–33 (CPVCGDKVSGYHYGLLTCESC). Lysine 34, lysine 38, and lysine 72 each carry N6-acetyllysine. An NR C4-type zinc finger spans residues 49–73 (CTESQSCKIDKTQRKRCPFCRFQKC). Residues 117–149 (GFKLETGPPMGVPPPPPPPPDYMLPPSLHAPEP) form a disordered region. Lysine 119 participates in a covalent cross-link: Glycyl lysine isopeptide (Lys-Gly) (interchain with G-Cter in SUMO). Residues 126–139 (MGVPPPPPPPPDYM) show a composition bias toward pro residues. Lysine 194 participates in a covalent cross-link: Glycyl lysine isopeptide (Lys-Gly) (interchain with G-Cter in SUMO). A Phosphoserine; by CDK7 modification is found at serine 203. The NR LBD domain maps to 223 to 460 (NVPELILQLL…NLLIEMLQAK (238 aa)). Residues glycine 342, tyrosine 437, and lysine 441 each contribute to the a 1,2-diacyl-sn-glycero-3-phosphocholine site.

The protein belongs to the nuclear hormone receptor family. NR5 subfamily. As to quaternary structure, binds DNA as a monomer. Part of a complex consisting of SFPQ, NONO and NR5A1. Interacts with NR0B2, NCOA2 and PPARGC1A. Interacts with DGKQ and CDK7. Binds to and activated by HIPK3. In terms of processing, acetylation stimulates the transcriptional activity. Sumoylation reduces CDK7-mediated phosphorylation on Ser-203. Post-translationally, phosphorylated on Ser-203 by CDK7. This phosphorylation promotes transcriptional activity.

Its subcellular location is the nucleus. In terms of biological role, transcriptional activator. Seems to be essential for sexual differentiation and formation of the primary steroidogenic tissues. Binds to the Ad4 site found in the promoter region of steroidogenic P450 genes such as CYP11A, CYP11B and CYP21B. Also regulates the AMH/Muellerian inhibiting substance gene as well as the AHCH and STAR genes. 5'-YCAAGGYC-3' and 5'-RRAGGTCA-3' are the consensus sequences for the recognition by NR5A1. The SFPQ-NONO-NR5A1 complex binds to the CYP17 promoter and regulates basal and cAMP-dependent transcriptional activity. Binds phosphatidylcholine and phospholipids with a phosphatidylinositol (PI) headgroup, in particular PI(3,4)P2 and PI(3,4,5)P3. Activated by the phosphorylation of NR5A1 by HIPK3 leading to increased steroidogenic gene expression upon cAMP signaling pathway stimulation. The polypeptide is Steroidogenic factor 1 (Nr5a1) (Rattus norvegicus (Rat)).